A 259-amino-acid polypeptide reads, in one-letter code: Protein TILLER ANGLE CONTROL 1 (259 aa).

The short motif at 56–62 is the IGT motif element; it reads GILAIGT. Disordered regions lie at residues 96–123, 206–226, and 239–259; these read EEKAEAKQDTPVTAPSEPASALEPAKMH, SCMEKMHHKKPTKPTSKPLKA, and GKKIHPEQLNGRSNAEGPVTA. The segment covering 109–119 has biased composition (low complexity); sequence APSEPASALEP.

Belongs to the TAC family. In terms of tissue distribution, expressed in the basal part of seedlings.

Functionally, involved in the regulation of tiller growth angle. Promotes horizontal shoot growth. TAC1 and LAZY1 play opposite functions in the regulation of tiller growth angle. The protein is Protein TILLER ANGLE CONTROL 1 of Oryza sativa subsp. indica (Rice).